Consider the following 299-residue polypeptide: Elongation factor Ts (299 aa).

The involved in Mg(2+) ion dislocation from EF-Tu stretch occupies residues 82–85; it reads TDFV.

Belongs to the EF-Ts family.

The protein resides in the cytoplasm. Associates with the EF-Tu.GDP complex and induces the exchange of GDP to GTP. It remains bound to the aminoacyl-tRNA.EF-Tu.GTP complex up to the GTP hydrolysis stage on the ribosome. The polypeptide is Elongation factor Ts (Dechloromonas aromatica (strain RCB)).